The chain runs to 357 residues: Glucose-6-phosphatase catalytic subunit 1 (357 aa).

The Lumenal segment spans residues 1–28 (MEERMNVLHDFGIQSTRYLQVNYEDSQD). The helical transmembrane segment at 29 to 49 (WFVLVSVIADLRNAFYVLFPI) threads the bilayer. Topologically, residues 50–60 (WFHIQETVGIN) are cytoplasmic. A helical membrane pass occupies residues 61 to 81 (LLWVAVVGDWFNLVFKWILFG). The Lumenal segment spans residues 82–117 (QRPYWWVLDTDYYSNSSVPLIKQFPVTCETGPGSPS). Arg83 is a substrate binding site. N-linked (GlcNAc...) asparagine glycosylation is present at Asn96. The helical transmembrane segment at 118–138 (GHAMGTAGVYYVMVTSTLAIF) threads the bilayer. The Proton donor role is filled by His119. Topologically, residues 139–147 (RGKKKSTYG) are cytoplasmic. Residues 148–168 (FRCLNVVLWLGYWAVQLNVCL) form a helical membrane-spanning segment. Topologically, residues 169-170 (SR) are lumenal. Position 170 (Arg170) interacts with substrate. A helical transmembrane segment spans residues 171 to 191 (IYLAAHFPHQVVAGVLSGIAV). The active-site Nucleophile is the His176. Topologically, residues 192–211 (AETFSHIRGIYNASLQRYCL) are cytoplasmic. The chain crosses the membrane as a helical span at residues 212-232 (ITFFLFGFALGFYLLLKGLGV). At 233–254 (DLLWTLEKAKRWCERPEWVHLD) the chain is on the lumenal side. Residues 255–275 (TTPFASLFKNLGTLLGLGLAL) form a helical membrane-spanning segment. The Cytoplasmic segment spans residues 276-291 (NSSMYRKSCKGELRKS). The chain crosses the membrane as a helical span at residues 292-312 (LPFRLACIVASLGLLHLFDSL). The Lumenal portion of the chain corresponds to 313–320 (KPPSQIES). The chain crosses the membrane as a helical span at residues 321–341 (IFYILSFCKSATVPFASVSLI). Over 342-357 (PYCLARLLGQTHKKSL) the chain is Cytoplasmic. Residues 354–357 (KKSL) carry the Prevents secretion from ER motif.

The protein belongs to the glucose-6-phosphatase family.

It localises to the endoplasmic reticulum membrane. The catalysed reaction is D-glucose 6-phosphate + H2O = D-glucose + phosphate. Its pathway is carbohydrate biosynthesis; gluconeogenesis. Functionally, hydrolyzes glucose-6-phosphate to glucose in the endoplasmic reticulum. Forms with the glucose-6-phosphate transporter (SLC37A4/G6PT) the complex responsible for glucose production in the terminal step of glycogenolysis and gluconeogenesis. Hence, it is the key enzyme in homeostatic regulation of blood glucose levels. The polypeptide is Glucose-6-phosphatase catalytic subunit 1 (G6pc1) (Rattus norvegicus (Rat)).